Reading from the N-terminus, the 221-residue chain is Translation initiation factor 6 (221 aa).

This sequence belongs to the eIF-6 family.

Binds to the 50S ribosomal subunit and prevents its association with the 30S ribosomal subunit to form the 70S initiation complex. The chain is Translation initiation factor 6 from Halorubrum lacusprofundi (strain ATCC 49239 / DSM 5036 / JCM 8891 / ACAM 34).